Reading from the N-terminus, the 126-residue chain is Probable small nuclear ribonucleoprotein Sm D1 (126 aa).

The Sm domain maps to 2–74 (KLVRFLMKLS…IRYIILPDPL (73 aa)). Residues 86–126 (RKKARAARAGASRGRGRGGMRGGRGGRGRGRGGPRGGGPRR) are disordered. Basic residues predominate over residues 99–126 (GRGRGGMRGGRGGRGRGRGGPRGGGPRR).

This sequence belongs to the snRNP core protein family.

It localises to the nucleus. Its subcellular location is the cytoplasm. The protein resides in the cytosol. Plays a role in pre-mRNA splicing as a core component of the spliceosomal U1, U2, U4 and U5 small nuclear ribonucleoproteins (snRNPs), the building blocks of the spliceosome. This is Probable small nuclear ribonucleoprotein Sm D1 (snr-3) from Caenorhabditis elegans.